Here is a 1207-residue protein sequence, read N- to C-terminus: Chromosomal serine/threonine-protein kinase JIL-1 (1207 aa).

Residues 1-19 (MSRLQKQNYEILSGTSTSR) show a composition bias toward polar residues. Disordered regions lie at residues 1-119 (MSRL…ASAR), 164-183 (QDME…SSSL), and 210-230 (SSST…LDLD). A phosphoserine mark is found at serine 29 and serine 31. Over residues 45 to 69 (LNGQLVANGNGKTRKNSNSETMTNG) the composition is skewed to polar residues. The segment covering 88 to 97 (NYNNNNNNNN) has biased composition (low complexity). The span at 98 to 108 (SISATNGQYTN) shows a compositional bias: polar residues. Residues 109–118 (SSSKTTSASA) are compositionally biased toward low complexity. Residues 164 to 178 (QDMEEDEPNGIEIDE) are compositionally biased toward acidic residues. The span at 213-226 (TTPSYAMPTSNSTP) shows a compositional bias: polar residues. Residues 261–530 (FKIIRVLGTG…ASEIKEHPFF (270 aa)) enclose the Protein kinase 1 domain. ATP-binding positions include 267 to 275 (LGTGAYGRV) and lysine 293. Residue aspartate 389 is the Proton acceptor of the active site. A Phosphoserine modification is found at serine 424. The 69-residue stretch at 531–599 (NGINWQELRT…VAPEHLEQMR (69 aa)) folds into the AGC-kinase C-terminal domain. A Phosphothreonine modification is found at threonine 588. In terms of domain architecture, Protein kinase 2 spans 623-886 (LELGTRTSNG…LSDILDSEWL (264 aa)). Residues 629-637 (TSNGAYGTC) and lysine 652 each bind ATP. Catalysis depends on aspartate 739, which acts as the Proton acceptor. Threonine 1045 carries the phosphothreonine modification. Serine 1047 bears the Phosphoserine mark. Positions 1168 to 1197 (TFPRPKAQLKRTKREPKVPRPPTRVQPERA) are disordered.

Belongs to the protein kinase superfamily. Ser/Thr protein kinase family. In terms of assembly, interacts with lola. Interacts with proteins of the male specific lethal (MSL) dosage compensation complex; this interaction is mediated by the kinase domains. It depends on Mg(2+) as a cofactor. Post-translationally, autophosphorylated in vitro.

It is found in the nucleus. The protein localises to the chromosome. The catalysed reaction is L-seryl-[protein] + ATP = O-phospho-L-seryl-[protein] + ADP + H(+). It catalyses the reaction L-threonyl-[protein] + ATP = O-phospho-L-threonyl-[protein] + ADP + H(+). Its function is as follows. Phosphorylates 'Ser-10' of histone H3. May regulate gene expression by establishing or maintaining the structure of more open chromatin regions. Also required for normal polytene chromosome structure, for oogenesis and for viability throughout development. Regulates the structure of polytene chromosomes in salivary glands. May phosphorylate 'Ser-1' of histone H2A. In Drosophila melanogaster (Fruit fly), this protein is Chromosomal serine/threonine-protein kinase JIL-1.